The chain runs to 501 residues: Cobyric acid synthase (501 aa).

The region spanning 251 to 446 (NIDIAIIRLS…LHGIFDSEEF (196 aa)) is the GATase cobBQ-type domain. The active-site Nucleophile is the Cys-332. Residue His-438 is part of the active site.

Belongs to the CobB/CobQ family. CobQ subfamily.

Its pathway is cofactor biosynthesis; adenosylcobalamin biosynthesis. Functionally, catalyzes amidations at positions B, D, E, and G on adenosylcobyrinic A,C-diamide. NH(2) groups are provided by glutamine, and one molecule of ATP is hydrogenolyzed for each amidation. The polypeptide is Cobyric acid synthase (Clostridium botulinum (strain Alaska E43 / Type E3)).